Consider the following 140-residue polypeptide: Nucleoside diphosphate kinase (140 aa).

ATP contacts are provided by Lys11, Phe59, Arg87, Thr93, Arg104, and Asn114. Catalysis depends on His117, which acts as the Pros-phosphohistidine intermediate.

The protein belongs to the NDK family. The cofactor is Mg(2+).

Its subcellular location is the cytoplasm. It catalyses the reaction a 2'-deoxyribonucleoside 5'-diphosphate + ATP = a 2'-deoxyribonucleoside 5'-triphosphate + ADP. It carries out the reaction a ribonucleoside 5'-diphosphate + ATP = a ribonucleoside 5'-triphosphate + ADP. Functionally, major role in the synthesis of nucleoside triphosphates other than ATP. The ATP gamma phosphate is transferred to the NDP beta phosphate via a ping-pong mechanism, using a phosphorylated active-site intermediate. This is Nucleoside diphosphate kinase from Metallosphaera sedula (strain ATCC 51363 / DSM 5348 / JCM 9185 / NBRC 15509 / TH2).